The chain runs to 87 residues: Small ribosomal subunit protein bS20 (87 aa).

The segment at 1–20 (MANHKSAEKRARQTIKKTER) is disordered.

This sequence belongs to the bacterial ribosomal protein bS20 family.

In terms of biological role, binds directly to 16S ribosomal RNA. This chain is Small ribosomal subunit protein bS20, found in Campylobacter jejuni subsp. jejuni serotype O:2 (strain ATCC 700819 / NCTC 11168).